The primary structure comprises 282 residues: Shikimate kinase (282 aa).

86 to 96 (PIKSGLSSSSA) lines the ATP pocket.

The protein belongs to the GHMP kinase family. Archaeal shikimate kinase subfamily.

It localises to the cytoplasm. The catalysed reaction is shikimate + ATP = 3-phosphoshikimate + ADP + H(+). The protein operates within metabolic intermediate biosynthesis; chorismate biosynthesis; chorismate from D-erythrose 4-phosphate and phosphoenolpyruvate: step 5/7. The polypeptide is Shikimate kinase (aroK) (Methanocaldococcus jannaschii (strain ATCC 43067 / DSM 2661 / JAL-1 / JCM 10045 / NBRC 100440) (Methanococcus jannaschii)).